Here is a 186-residue protein sequence, read N- to C-terminus: ATP synthase subunit delta (186 aa).

Belongs to the ATPase delta chain family. As to quaternary structure, F-type ATPases have 2 components, F(1) - the catalytic core - and F(0) - the membrane proton channel. F(1) has five subunits: alpha(3), beta(3), gamma(1), delta(1), epsilon(1). CF(0) has four main subunits: a(1), b(1), b'(1) and c(10-14). The alpha and beta chains form an alternating ring which encloses part of the gamma chain. F(1) is attached to F(0) by a central stalk formed by the gamma and epsilon chains, while a peripheral stalk is formed by the delta, b and b' chains.

It localises to the cell inner membrane. F(1)F(0) ATP synthase produces ATP from ADP in the presence of a proton or sodium gradient. F-type ATPases consist of two structural domains, F(1) containing the extramembraneous catalytic core and F(0) containing the membrane proton channel, linked together by a central stalk and a peripheral stalk. During catalysis, ATP synthesis in the catalytic domain of F(1) is coupled via a rotary mechanism of the central stalk subunits to proton translocation. Functionally, this protein is part of the stalk that links CF(0) to CF(1). It either transmits conformational changes from CF(0) to CF(1) or is implicated in proton conduction. The protein is ATP synthase subunit delta of Rhodospirillum rubrum (strain ATCC 11170 / ATH 1.1.1 / DSM 467 / LMG 4362 / NCIMB 8255 / S1).